We begin with the raw amino-acid sequence, 278 residues long: HTH-type transcriptional activator RhaS (278 aa).

The HTH araC/xylS-type domain occupies 174-272; the sequence is NLLLAWLEDH…NWSPRDIRQG (99 aa). 2 DNA-binding regions (H-T-H motif) span residues 191-212 and 239-262; these read DAVADQFSLSLRTLHRQLKQQT and VTDIAYHCGFSDSNHFSTLFRREF.

As to quaternary structure, binds DNA as a dimer.

The protein resides in the cytoplasm. In terms of biological role, activates expression of the rhaBAD and rhaT operons. In Escherichia coli O157:H7, this protein is HTH-type transcriptional activator RhaS.